A 558-amino-acid polypeptide reads, in one-letter code: Membrane protein insertase YidC (558 aa).

Transmembrane regions (helical) follow at residues 6–26, 359–379, 434–454, 480–500, and 513–533; these read SFFIIVFLIVSFILWKIWDDE, FIHTYTIDNWGISIILITVII, LGGCLPLLIQMPIFLALYYML, ILPIIMGITMFFIQKLSPTTI, and LVIFTIFFLWFPSGLVLYYII.

It belongs to the OXA1/ALB3/YidC family. Type 1 subfamily. In terms of assembly, interacts with the Sec translocase complex via SecD. Specifically interacts with transmembrane segments of nascent integral membrane proteins during membrane integration.

Its subcellular location is the cell inner membrane. Its function is as follows. Required for the insertion and/or proper folding and/or complex formation of integral membrane proteins into the membrane. Involved in integration of membrane proteins that insert both dependently and independently of the Sec translocase complex, as well as at least some lipoproteins. Aids folding of multispanning membrane proteins. This is Membrane protein insertase YidC from Blochmanniella floridana.